The primary structure comprises 728 residues: Procollagen-lysine,2-oxoglutarate 5-dioxygenase 1 (728 aa).

The N-terminal stretch at 1-18 (MRSLLLLASLAWLLLAQA) is a signal peptide. Asn-177, Asn-198, and Asn-539 each carry an N-linked (GlcNAc...) asparagine glycan. The Fe2OG dioxygenase domain occupies 637 to 728 (QFDLAFVVRY…RYIAVSFVDP (92 aa)). His-657 and Asp-659 together coordinate Fe cation. N-linked (GlcNAc...) asparagine glycosylation is present at Asn-687. Residue His-709 coordinates Fe cation. Arg-719 is a catalytic residue.

Homodimer. Identified in a complex with P3H3 and P3H4. Requires Fe(2+) as cofactor. The cofactor is L-ascorbate.

The protein resides in the rough endoplasmic reticulum membrane. The enzyme catalyses L-lysyl-[collagen] + 2-oxoglutarate + O2 = (5R)-5-hydroxy-L-lysyl-[collagen] + succinate + CO2. Part of a complex composed of PLOD1, P3H3 and P3H4 that catalyzes hydroxylation of lysine residues in collagen alpha chains and is required for normal assembly and cross-linkling of collagen fibrils. Forms hydroxylysine residues in -Xaa-Lys-Gly- sequences in collagens. These hydroxylysines serve as sites of attachment for carbohydrate units and are essential for the stability of the intermolecular collagen cross-links. This is Procollagen-lysine,2-oxoglutarate 5-dioxygenase 1 (Plod1) from Rattus norvegicus (Rat).